We begin with the raw amino-acid sequence, 488 residues long: MSQSVESRTRIKSERYESGVIPYAKMGYWDADYVIKETDILALFRITPQPGVDPIEASAAIAGESSTATWTVVWTDLLTACDLYRAKAYRVDPVPNVADQYFAYIAYDIDLFEEGSIANLTASIIGNVFGFKAVKALRLEDMRMPVAYLKTFQGPATGLIVERERMDKFGRPFLGATVKPKLGLSGKNYGRVVYEGLKGGLDFLKDDENINSQPFMRWRERFLYSMEGVNKASASAGEIKGHYLNVTAATMEDMYERAEFSKEVGSIICMIDLVIGYTAIQSMAIWARKHDMILHLHRAGNSTYSRQKNHGMNFRVICKWMRMAGVDHIHAGTVVGKLEGDPLMIKGFYNTLLESETDINLPQGLFFAQNWASLRKVVPVASGGIHAGQMHQLLDYLGDDVVLQFGGGTIGHPDGIQAGATANRVALESMVMARNEGRNYVAEGPQILRDAAKTCGPLQTALDLWKDISFNYTSTDTADFVETPTANI.

Residues Asn-127 and Thr-177 each contribute to the substrate site. Lys-179 serves as the catalytic Proton acceptor. Lys-181 is a substrate binding site. Mg(2+)-binding residues include Lys-205, Asp-207, and Glu-208. Lys-205 bears the N6-carboxylysine mark. The Proton acceptor role is filled by His-297. Residues Arg-298, His-330, and Ser-382 each contribute to the substrate site.

This sequence belongs to the RuBisCO large chain family. Type I subfamily. As to quaternary structure, heterohexadecamer of 8 large chains and 8 small chains. It depends on Mg(2+) as a cofactor.

The protein resides in the plastid. Its subcellular location is the chloroplast. The enzyme catalyses 2 (2R)-3-phosphoglycerate + 2 H(+) = D-ribulose 1,5-bisphosphate + CO2 + H2O. It catalyses the reaction D-ribulose 1,5-bisphosphate + O2 = 2-phosphoglycolate + (2R)-3-phosphoglycerate + 2 H(+). In terms of biological role, ruBisCO catalyzes two reactions: the carboxylation of D-ribulose 1,5-bisphosphate, the primary event in carbon dioxide fixation, as well as the oxidative fragmentation of the pentose substrate in the photorespiration process. Both reactions occur simultaneously and in competition at the same active site. The chain is Ribulose bisphosphate carboxylase large chain (rbcL) from Pyropia dentata (Red alga).